Consider the following 124-residue polypeptide: Large ribosomal subunit protein bL12 (124 aa).

Belongs to the bacterial ribosomal protein bL12 family. In terms of assembly, homodimer. Part of the ribosomal stalk of the 50S ribosomal subunit. Forms a multimeric L10(L12)X complex, where L10 forms an elongated spine to which 2 to 4 L12 dimers bind in a sequential fashion. Binds GTP-bound translation factors.

Forms part of the ribosomal stalk which helps the ribosome interact with GTP-bound translation factors. Is thus essential for accurate translation. The sequence is that of Large ribosomal subunit protein bL12 from Dehalococcoides mccartyi (strain ATCC BAA-2266 / KCTC 15142 / 195) (Dehalococcoides ethenogenes (strain 195)).